The primary structure comprises 142 residues: Large ribosomal subunit protein uL22 (142 aa).

Positions 122 to 142 (RAEAPEETKPSRGTNKEQKAA) are disordered.

The protein belongs to the universal ribosomal protein uL22 family. As to quaternary structure, part of the 50S ribosomal subunit.

Its function is as follows. This protein binds specifically to 23S rRNA; its binding is stimulated by other ribosomal proteins, e.g. L4, L17, and L20. It is important during the early stages of 50S assembly. It makes multiple contacts with different domains of the 23S rRNA in the assembled 50S subunit and ribosome. The globular domain of the protein is located near the polypeptide exit tunnel on the outside of the subunit, while an extended beta-hairpin is found that lines the wall of the exit tunnel in the center of the 70S ribosome. In Gluconobacter oxydans (strain 621H) (Gluconobacter suboxydans), this protein is Large ribosomal subunit protein uL22.